The sequence spans 306 residues: Recombination-associated protein RdgC (306 aa).

This sequence belongs to the RdgC family.

The protein localises to the cytoplasm. It is found in the nucleoid. Functionally, may be involved in recombination. This is Recombination-associated protein RdgC from Pseudomonas syringae pv. syringae (strain B728a).